The primary structure comprises 301 residues: 2-methoxy-6-polyprenyl-1,4-benzoquinol methylase, mitochondrial (301 aa).

Residues Met-1 to Phe-16 constitute a mitochondrion transit peptide. A compositionally biased stretch (polar residues) spans Arg-20–Gly-31. The interval Arg-20–Lys-44 is disordered. S-adenosyl-L-methionine contacts are provided by residues Thr-111, Asp-139, and Asp-173–Ala-174.

This sequence belongs to the class I-like SAM-binding methyltransferase superfamily. MenG/UbiE family. As to quaternary structure, component of a multi-subunit COQ enzyme complex.

It localises to the mitochondrion inner membrane. The enzyme catalyses a 2-methoxy-6-(all-trans-polyprenyl)benzene-1,4-diol + S-adenosyl-L-methionine = a 5-methoxy-2-methyl-3-(all-trans-polyprenyl)benzene-1,4-diol + S-adenosyl-L-homocysteine + H(+). It participates in cofactor biosynthesis; ubiquinone biosynthesis. Methyltransferase required for the conversion of 2-polyprenyl-6-methoxy-1,4-benzoquinol (DDMQH2) to 2-polyprenyl-3-methyl-6-methoxy-1,4-benzoquinol (DMQH2). The sequence is that of 2-methoxy-6-polyprenyl-1,4-benzoquinol methylase, mitochondrial from Drosophila melanogaster (Fruit fly).